The primary structure comprises 83 residues: UPF0512 protein I (83 aa).

It belongs to the UPF0512 family.

In Dictyostelium discoideum (Social amoeba), this protein is UPF0512 protein I.